The primary structure comprises 119 residues: MAAEEGQVIGCHTNDVWTVQLDKAKESNKLIVIDFTASWCPPCRMIAPIFNDLAKKFMSSAIFFKVDVDELQSVAKEFGVEAMPTFVFIKAGEVVDKLVGANKEDLQAKIVKHTGVTTA.

The region spanning 2–115 is the Thioredoxin domain; sequence AAEEGQVIGC…LQAKIVKHTG (114 aa). Catalysis depends on nucleophile residues cysteine 40 and cysteine 43. The cysteines at positions 40 and 43 are disulfide-linked.

It belongs to the thioredoxin family. Plant H-type subfamily. Interacts with MDH1.

The protein resides in the cytoplasm. In terms of biological role, thiol-disulfide oxidoreductase probably involved in the redox regulation of a number of cytosolic enzymes. Possesses insulin disulfide bonds reducing activity. This is Thioredoxin H4 (TRX4) from Arabidopsis thaliana (Mouse-ear cress).